A 240-amino-acid chain; its full sequence is Ribosomal RNA small subunit methyltransferase I (240 aa).

It belongs to the methyltransferase superfamily. RsmI family.

The protein resides in the cytoplasm. The enzyme catalyses cytidine(1402) in 16S rRNA + S-adenosyl-L-methionine = 2'-O-methylcytidine(1402) in 16S rRNA + S-adenosyl-L-homocysteine + H(+). Catalyzes the 2'-O-methylation of the ribose of cytidine 1402 (C1402) in 16S rRNA. This is Ribosomal RNA small subunit methyltransferase I from Leptospira biflexa serovar Patoc (strain Patoc 1 / ATCC 23582 / Paris).